The chain runs to 212 residues: Dephospho-CoA kinase (212 aa).

A DPCK domain is found at 8 to 212 (LVGVTGGLGS…QLLQQAMLRR (205 aa)). An ATP-binding site is contributed by 16–21 (GSGKSM).

It belongs to the CoaE family.

Its subcellular location is the cytoplasm. It catalyses the reaction 3'-dephospho-CoA + ATP = ADP + CoA + H(+). It functions in the pathway cofactor biosynthesis; coenzyme A biosynthesis; CoA from (R)-pantothenate: step 5/5. Functionally, catalyzes the phosphorylation of the 3'-hydroxyl group of dephosphocoenzyme A to form coenzyme A. This Chlorobium chlorochromatii (strain CaD3) protein is Dephospho-CoA kinase.